A 127-amino-acid chain; its full sequence is Large ribosomal subunit protein bL19 (127 aa).

This sequence belongs to the bacterial ribosomal protein bL19 family.

In terms of biological role, this protein is located at the 30S-50S ribosomal subunit interface and may play a role in the structure and function of the aminoacyl-tRNA binding site. The protein is Large ribosomal subunit protein bL19 of Roseobacter denitrificans (strain ATCC 33942 / OCh 114) (Erythrobacter sp. (strain OCh 114)).